We begin with the raw amino-acid sequence, 77 residues long: U8-lycotoxin-Ls1j (77 aa).

An N-terminal signal peptide occupies residues 1–20 (MKLIIFTGLILFAIVSLIEA). Positions 21–26 (QANNEK) are excised as a propeptide.

Belongs to the neurotoxin 19 (CSTX) family. 08 (U8-Lctx) subfamily. In terms of processing, contains 4 disulfide bonds. As to expression, expressed by the venom gland.

The protein resides in the secreted. In Lycosa singoriensis (Wolf spider), this protein is U8-lycotoxin-Ls1j.